A 480-amino-acid polypeptide reads, in one-letter code: ATP synthase subunit beta, chloroplastic (480 aa).

ATP is bound at residue 161 to 168; sequence GGAGVGKT.

The protein belongs to the ATPase alpha/beta chains family. In terms of assembly, F-type ATPases have 2 components, CF(1) - the catalytic core - and CF(0) - the membrane proton channel. CF(1) has five subunits: alpha(3), beta(3), gamma(1), delta(1), epsilon(1). CF(0) has four main subunits: a(1), b(1), b'(1) and c(9-12).

Its subcellular location is the plastid. It localises to the chloroplast thylakoid membrane. The catalysed reaction is ATP + H2O + 4 H(+)(in) = ADP + phosphate + 5 H(+)(out). Produces ATP from ADP in the presence of a proton gradient across the membrane. The catalytic sites are hosted primarily by the beta subunits. This chain is ATP synthase subunit beta, chloroplastic, found in Tetradesmus obliquus (Green alga).